The sequence spans 371 residues: Phosphate acyltransferase (371 aa).

Belongs to the PlsX family. In terms of assembly, homodimer. Probably interacts with PlsY.

The protein resides in the cytoplasm. It carries out the reaction a fatty acyl-[ACP] + phosphate = an acyl phosphate + holo-[ACP]. It participates in lipid metabolism; phospholipid metabolism. Catalyzes the reversible formation of acyl-phosphate (acyl-PO(4)) from acyl-[acyl-carrier-protein] (acyl-ACP). This enzyme utilizes acyl-ACP as fatty acyl donor, but not acyl-CoA. The sequence is that of Phosphate acyltransferase from Polaromonas sp. (strain JS666 / ATCC BAA-500).